The chain runs to 156 residues: Histidine-containing phosphotransfer protein 2 (156 aa).

An N-acetylmethionine modification is found at M1. The HPt domain occupies 40–147; that stretch reads SPDFVSEVLS…NLEKQIIQAG (108 aa). A Phosphohistidine modification is found at H82.

In terms of assembly, interacts with the B-type response regulators ARR1, ARR2 and ARR10. Binds to AHK1, AHK2, AHK3, AHK4, AHK5, ETR1 and CKI1. Post-translationally, two-component system major event consists of a His-to-Asp phosphorelay between a sensor histidine kinase (HK) and a response regulator (RR). In plants, the His-to-Asp phosphorelay involves an additional intermediate named Histidine-containing phosphotransfer protein (HPt). This multistep phosphorelay consists of a His-Asp-His-Asp sequential transfer of a phosphate group between first a His and an Asp of the HK protein, followed by the transfer to a conserved His of the HPt protein and finally the transfer to an Asp in the receiver domain of the RR protein. In terms of tissue distribution, strongly expressed in flowers and roots. Detected also in leaves, siliques and stems.

It is found in the cytoplasm. The protein localises to the cytosol. The protein resides in the nucleus. Its function is as follows. Functions as a two-component phosphorelay mediators between cytokinin sensor histidine kinases and response regulator (B-type ARRs). Plays an important role in propagating cytokinin signal transduction through the multistep His-to-Asp phosphorelay. In Arabidopsis thaliana (Mouse-ear cress), this protein is Histidine-containing phosphotransfer protein 2 (AHP2).